The chain runs to 371 residues: Glycerol-3-phosphate dehydrogenase [NAD(+)] 2 (371 aa).

NAD(+) contacts are provided by residues 18–23 (GSGNWG), Phe-50, and Phe-106. Position 129 (Lys-129) interacts with substrate. Ala-162 contacts NAD(+). Lys-222 serves as the catalytic Proton acceptor. Residues Arg-294 and Gln-323 each contribute to the NAD(+) site. 294–295 (RN) contacts substrate.

It belongs to the NAD-dependent glycerol-3-phosphate dehydrogenase family. As to quaternary structure, interacts with human CFH/complement factor H; the interaction is direct and enables the pathogen to evade the host innate immune system. Interacts with human CFHR1/complement factor H-related protein 1; the interaction is direct. Interacts with human PLG/plasminogen; the interaction is direct and provides active plasmin on the surface of fungal cells.

It localises to the secreted. The protein resides in the cell wall. It is found in the cytoplasm. The protein localises to the peroxisome. It catalyses the reaction sn-glycerol 3-phosphate + NAD(+) = dihydroxyacetone phosphate + NADH + H(+). Functionally, may catalyze the production and accumulation of glycerol during hyperosmotic stress conditions. Glycerol acts as a osmoregulator that prevents loss of water and turgor of the cells. Mediates evasion of the host innate immune system by binding inhibitory components of the host alternative complement system, in a manner dependent on estrogen-induced inhibition of EBP1. This Candida albicans (strain SC5314 / ATCC MYA-2876) (Yeast) protein is Glycerol-3-phosphate dehydrogenase [NAD(+)] 2.